Consider the following 422-residue polypeptide: Replication factor C large subunit (422 aa).

63–70 (GPPGVGKT) contributes to the ATP binding site.

It belongs to the activator 1 small subunits family. RfcL subfamily. In terms of assembly, heteromultimer composed of small subunits (RfcS) and large subunits (RfcL).

In terms of biological role, part of the RFC clamp loader complex which loads the PCNA sliding clamp onto DNA. The polypeptide is Replication factor C large subunit (Pyrobaculum aerophilum (strain ATCC 51768 / DSM 7523 / JCM 9630 / CIP 104966 / NBRC 100827 / IM2)).